Here is a 176-residue protein sequence, read N- to C-terminus: Tubulin polymerization-promoting protein family member 3 (176 aa).

A2 bears the N-acetylalanine mark.

This sequence belongs to the TPPP family.

The protein resides in the cytoplasm. It localises to the cytoskeleton. Regulator of microtubule dynamic that has microtubule bundling activity. Required for embryo implantation; possibly by regulating beta-catenin. Also required for decidualization via regulation of beta-catenin. This chain is Tubulin polymerization-promoting protein family member 3 (TPPP3), found in Bos taurus (Bovine).